Consider the following 122-residue polypeptide: Large ribosomal subunit protein bL12 (122 aa).

It belongs to the bacterial ribosomal protein bL12 family. In terms of assembly, homodimer. Part of the ribosomal stalk of the 50S ribosomal subunit. Forms a multimeric L10(L12)X complex, where L10 forms an elongated spine to which 2 to 4 L12 dimers bind in a sequential fashion. Binds GTP-bound translation factors.

Its function is as follows. Forms part of the ribosomal stalk which helps the ribosome interact with GTP-bound translation factors. Is thus essential for accurate translation. In Xylella fastidiosa (strain M23), this protein is Large ribosomal subunit protein bL12.